Reading from the N-terminus, the 231-residue chain is 7-cyano-7-deazaguanine synthase (231 aa).

7-17 is an ATP binding site; sequence LSSGLDSVAAL. Residues cysteine 195, cysteine 203, cysteine 206, and cysteine 209 each contribute to the Zn(2+) site.

This sequence belongs to the QueC family. Zn(2+) serves as cofactor.

The catalysed reaction is 7-carboxy-7-deazaguanine + NH4(+) + ATP = 7-cyano-7-deazaguanine + ADP + phosphate + H2O + H(+). Its pathway is purine metabolism; 7-cyano-7-deazaguanine biosynthesis. Functionally, catalyzes the ATP-dependent conversion of 7-carboxy-7-deazaguanine (CDG) to 7-cyano-7-deazaguanine (preQ(0)). The protein is 7-cyano-7-deazaguanine synthase of Methanosarcina barkeri (strain Fusaro / DSM 804).